Consider the following 235-residue polypeptide: Large ribosomal subunit protein uL1 (235 aa).

This sequence belongs to the universal ribosomal protein uL1 family. As to quaternary structure, part of the 50S ribosomal subunit.

In terms of biological role, binds directly to 23S rRNA. The L1 stalk is quite mobile in the ribosome, and is involved in E site tRNA release. Its function is as follows. Protein L1 is also a translational repressor protein, it controls the translation of the L11 operon by binding to its mRNA. The polypeptide is Large ribosomal subunit protein uL1 (Fervidobacterium nodosum (strain ATCC 35602 / DSM 5306 / Rt17-B1)).